A 282-amino-acid polypeptide reads, in one-letter code: NADPH-dependent 7-cyano-7-deazaguanine reductase (282 aa).

88 to 90 (IES) is a substrate binding site. 90–91 (SK) serves as a coordination point for NADPH. Cys-190 (thioimide intermediate) is an active-site residue. Residue Asp-197 is the Proton donor of the active site. Position 229–230 (229–230 (HE)) interacts with substrate. 258–259 (RG) is an NADPH binding site.

Belongs to the GTP cyclohydrolase I family. QueF type 2 subfamily. As to quaternary structure, homodimer.

The protein localises to the cytoplasm. It carries out the reaction 7-aminomethyl-7-carbaguanine + 2 NADP(+) = 7-cyano-7-deazaguanine + 2 NADPH + 3 H(+). The protein operates within tRNA modification; tRNA-queuosine biosynthesis. Functionally, catalyzes the NADPH-dependent reduction of 7-cyano-7-deazaguanine (preQ0) to 7-aminomethyl-7-deazaguanine (preQ1). This Pectobacterium carotovorum subsp. carotovorum (strain PC1) protein is NADPH-dependent 7-cyano-7-deazaguanine reductase.